A 77-amino-acid chain; its full sequence is Translation initiation factor IF-1, chloroplastic (77 aa).

The 71-residue stretch at 1 to 71 (MKEQKLIHEG…TRGRIIYRLR (71 aa)) folds into the S1-like domain.

The protein belongs to the IF-1 family. As to quaternary structure, component of the 30S ribosomal translation pre-initiation complex which assembles on the 30S ribosome in the order IF-2 and IF-3, IF-1 and N-formylmethionyl-tRNA(fMet); mRNA recruitment can occur at any time during PIC assembly.

It is found in the plastid. Its subcellular location is the chloroplast. In terms of biological role, one of the essential components for the initiation of protein synthesis. Stabilizes the binding of IF-2 and IF-3 on the 30S subunit to which N-formylmethionyl-tRNA(fMet) subsequently binds. Helps modulate mRNA selection, yielding the 30S pre-initiation complex (PIC). Upon addition of the 50S ribosomal subunit IF-1, IF-2 and IF-3 are released leaving the mature 70S translation initiation complex. The sequence is that of Translation initiation factor IF-1, chloroplastic from Phalaenopsis aphrodite subsp. formosana (Moth orchid).